A 309-amino-acid polypeptide reads, in one-letter code: tRNA dimethylallyltransferase (309 aa).

10–17 contributes to the ATP binding site; that stretch reads GPTASGKT. A substrate-binding site is contributed by 12 to 17; sequence TASGKT. 2 interaction with substrate tRNA regions span residues 35–38 and 240–245; these read DSAL and RCVGYR.

It belongs to the IPP transferase family. Monomer. The cofactor is Mg(2+).

It catalyses the reaction adenosine(37) in tRNA + dimethylallyl diphosphate = N(6)-dimethylallyladenosine(37) in tRNA + diphosphate. Its function is as follows. Catalyzes the transfer of a dimethylallyl group onto the adenine at position 37 in tRNAs that read codons beginning with uridine, leading to the formation of N6-(dimethylallyl)adenosine (i(6)A). The polypeptide is tRNA dimethylallyltransferase (Baumannia cicadellinicola subsp. Homalodisca coagulata).